An 881-amino-acid polypeptide reads, in one-letter code: MNSKNSIILDNLADVSDIIDYEQNSIDYQRSIKNIEQLKSTEATEITNKLAINKAKKSSNILLEVPKETIYLDHNGSIQVITSEIIRTYVEKIFEKMEVTHLDIDKMTKNIFPKLKSINTIKDIDNQIISTASEMVTDHYDYPKIAVWILMTNLHDNTSDDFLETAEKLYNNKSESNKNAPIISENIYNFIKKHIKEINRVIRYDRDYNLTIFGFRTLEKSYLKRINKKIVERPQHLFMRVAITLHYRKNDLDRIFETYKYLSKGYFTHATPTLFNAGTTHEQLSSCFLLGIGDSLEEISECWKECALISKHAGGIGIHMTNIRVEGAYIASTQGEAGGLRVLTIFNDISRYANQGGKRPGSFAIFIEPWHGDIFFFLDLKKNTGAETERARDLFLGLMINDIFMERVYKDDVWSLMCPSQCPNLLNKYGDEFTKEYLKYESEGIYLKQIRAIDLWFKIMESQIETGVPYVMFKDAINDKSNQINIGVVNGSNLCCEIVEVSDKNNFSVCNLSSICLPRFVKIIDEVPTFNYQKLFKISRILTRNLNNIIDINFYPLDKTRITNLRDRPIGIGVQGLADVFAMFKTPFDSEIARDLNRKIFETIYYGALTESNKLAREFGTYQTYQGSPISQGKFQFDLWNFDKSQLSGMWDWELLRQEILNHGVRNSLVTTCMPTASTSQIMGWNECIEPYTENIYSRSTMAGEYFVINKHLIKDLIELGVWNSEMVDLIKYYKGSVANIPNIPDNIKAIYRTVWEIPQKSIIEMAADRAPFVDQTQSMNLYIDKPSFARLNSCLFYAWRKGLKTGMYYLRSKPASSANQFGIDIDKIKEIESKNGIKKQEDTFDLTDLTNTINQQVSGMVCRFVPAHLRKPGECLSCDG.

An ATP-cone domain is found at 69–160 (TIYLDHNGSI…MTNLHDNTSD (92 aa)). Substrate contacts are provided by residues threonine 271, 286 to 287 (SC), glycine 315, 493 to 497 (NLCCE), and 675 to 679 (PTAST). A disulfide bridge links cysteine 287 with cysteine 510. The Proton acceptor role is filled by asparagine 493. Cysteine 495 serves as the catalytic Cysteine radical intermediate. The active-site Proton acceptor is the glutamate 497.

The protein belongs to the ribonucleoside diphosphate reductase large chain family. In terms of assembly, heterotetramer composed of a homodimer of the large subunit (R1) and a homodimer of the small subunit (R2). Larger multisubunit protein complex are also active, composed of (R1)n(R2)n.

The catalysed reaction is a 2'-deoxyribonucleoside 5'-diphosphate + [thioredoxin]-disulfide + H2O = a ribonucleoside 5'-diphosphate + [thioredoxin]-dithiol. Under complex allosteric control mediated by deoxynucleoside triphosphates and ATP binding. The type of nucleotide bound at the specificity site determines substrate preference. It seems probable that ATP makes the enzyme reduce CDP and UDP, dGTP favors ADP reduction and dTTP favors GDP reduction. Ribonucleoside-diphosphate reductase holoenzyme provides the precursors necessary for viral DNA synthesis. Allows virus growth in non-dividing cells. Catalyzes the biosynthesis of deoxyribonucleotides from the corresponding ribonucleotides. This chain is Ribonucleoside-diphosphate reductase large subunit (RNR1), found in Acanthamoeba polyphaga mimivirus (APMV).